A 239-amino-acid chain; its full sequence is Probable 2-phosphosulfolactate phosphatase (239 aa).

Belongs to the ComB family. The cofactor is Mg(2+).

It catalyses the reaction (2R)-O-phospho-3-sulfolactate + H2O = (2R)-3-sulfolactate + phosphate. This is Probable 2-phosphosulfolactate phosphatase from Clostridium botulinum (strain Loch Maree / Type A3).